The chain runs to 297 residues: 1D-myo-inositol 2-acetamido-2-deoxy-alpha-D-glucopyranoside deacetylase (297 aa).

Residues His14, Asp17, and His149 each contribute to the Zn(2+) site.

This sequence belongs to the MshB deacetylase family. The cofactor is Zn(2+).

The enzyme catalyses 1D-myo-inositol 2-acetamido-2-deoxy-alpha-D-glucopyranoside + H2O = 1D-myo-inositol 2-amino-2-deoxy-alpha-D-glucopyranoside + acetate. Its function is as follows. Catalyzes the deacetylation of 1D-myo-inositol 2-acetamido-2-deoxy-alpha-D-glucopyranoside (GlcNAc-Ins) in the mycothiol biosynthesis pathway. In Thermomonospora curvata (strain ATCC 19995 / DSM 43183 / JCM 3096 / KCTC 9072 / NBRC 15933 / NCIMB 10081 / Henssen B9), this protein is 1D-myo-inositol 2-acetamido-2-deoxy-alpha-D-glucopyranoside deacetylase.